The primary structure comprises 369 residues: tRNA(Met) cytidine acetate ligase (369 aa).

ATP-binding positions include 7-20 (VAEF…HKYL), glycine 96, asparagine 152, and arginine 175.

It belongs to the TmcAL family.

The protein localises to the cytoplasm. The enzyme catalyses cytidine(34) in elongator tRNA(Met) + acetate + ATP = N(4)-acetylcytidine(34) in elongator tRNA(Met) + AMP + diphosphate. Its function is as follows. Catalyzes the formation of N(4)-acetylcytidine (ac(4)C) at the wobble position of elongator tRNA(Met), using acetate and ATP as substrates. First activates an acetate ion to form acetyladenylate (Ac-AMP) and then transfers the acetyl group to tRNA to form ac(4)C34. The protein is tRNA(Met) cytidine acetate ligase of Streptococcus agalactiae serotype III (strain NEM316).